The primary structure comprises 740 residues: Polyribonucleotide nucleotidyltransferase (740 aa).

2 residues coordinate Mg(2+): D514 and D520. One can recognise a KH domain in the interval 580–639 (PRIITVKIPVDKIGEVIGPKRQMINQIQEDTGAEITIEDDGTIYIGAADGPAAEAARATI). An S1 motif domain is found at 651 to 723 (GERILGSVVK…SRGKLSLIPV (73 aa)).

Belongs to the polyribonucleotide nucleotidyltransferase family. In terms of assembly, homotrimer. Requires Mg(2+) as cofactor.

The protein resides in the cytoplasm. It catalyses the reaction RNA(n+1) + phosphate = RNA(n) + a ribonucleoside 5'-diphosphate. Functionally, involved in mRNA degradation. Catalyzes the phosphorolysis of single-stranded polyribonucleotides processively in the 3'- to 5'-direction. This is Polyribonucleotide nucleotidyltransferase from Streptomyces antibioticus.